The following is a 460-amino-acid chain: Cobyrinate a,c-diamide synthase (460 aa).

The 193-residue stretch at 248–440 (KIAVARDAAF…THFHFGSSTK (193 aa)) folds into the GATase cobBQ-type domain. Cys-331 serves as the catalytic Nucleophile.

It belongs to the CobB/CbiA family. Mg(2+) is required as a cofactor.

It catalyses the reaction cob(II)yrinate + 2 L-glutamine + 2 ATP + 2 H2O = cob(II)yrinate a,c diamide + 2 L-glutamate + 2 ADP + 2 phosphate + 2 H(+). Its pathway is cofactor biosynthesis; adenosylcobalamin biosynthesis; cob(II)yrinate a,c-diamide from sirohydrochlorin (anaerobic route): step 10/10. Functionally, catalyzes the ATP-dependent amidation of the two carboxylate groups at positions a and c of cobyrinate, using either L-glutamine or ammonia as the nitrogen source. The sequence is that of Cobyrinate a,c-diamide synthase from Priestia megaterium (Bacillus megaterium).